A 285-amino-acid chain; its full sequence is Probable methyltransferase ltbC (285 aa).

A disordered region spans residues 1-22 (MASTGQTNNYKQGYSSQTVETQ).

The protein belongs to the class I-like SAM-binding methyltransferase superfamily. Monomer.

Functionally, probable methyltransferase; part of the gene cluster that mediates the biosynthesis of luteodienoside A, a glycosylated polyketide consisting of an unusual 1-O-beta-D-glucopyranosyl-myo-inositol (glucinol) ester of 3-hydroxy-2,2,4-trimethylocta-4,6-dienoic acid. The HR-PKS ltbA produces the trimethylated polyketide chain from acetyl-CoA, malonyl-CoA and S-adenosylmethionine (SAM), and the ltbA cAT domain then uses glucinol produced by the glycosyltransferase ltbB as an offloading substrate to release luteodienoside A. Since ltbA and ltbB are sufficient for the biosynthesis of luteodienoside A, the functions of the methyltransferase ltbC and the FAD-binding monooxygenase ltbD within the pathway remain obscur. This is Probable methyltransferase ltbC from Aspergillus luteorubrus.